The primary structure comprises 120 residues: C-C motif chemokine 2 (120 aa).

A signal peptide spans 1–23 (MQRSSVLLCLLVIEATFCSLLMA). Glutamine 24 carries the pyrrolidone carboxylic acid modification. 2 disulfide bridges follow: cysteine 33–cysteine 57 and cysteine 34–cysteine 73. The disordered stretch occupies residues 91 to 120 (RTQQKQNSTAPQTSKPLNIRFTTQDPKNRS). Residues 93-120 (QQKQNSTAPQTSKPLNIRFTTQDPKNRS) are compositionally biased toward polar residues. Residue asparagine 97 is glycosylated (N-linked (GlcNAc...) asparagine).

The protein belongs to the intercrine beta (chemokine CC) family. In terms of assembly, monomer or homodimer; in equilibrium. Is tethered on endothelial cells by glycosaminoglycan (GAG) side chains of proteoglycans. Interacts with TNFAIP6 (via Link domain). Processing at the N-terminus can regulate receptor and target cell selectivity. Deletion of the N-terminal residue converts it from an activator of basophil to an eosinophil chemoattractant. Post-translationally, N-Glycosylated.

The protein localises to the secreted. Acts as a ligand for C-C chemokine receptor CCR2. Signals through binding and activation of CCR2 and induces a strong chemotactic response and mobilization of intracellular calcium ions. Exhibits a chemotactic activity for monocytes and basophils but not neutrophils or eosinophils. Plays an important role in mediating peripheral nerve injury-induced neuropathic pain. Increases NMDA-mediated synaptic transmission in both dopamine D1 and D2 receptor-containing neurons, which may be caused by MAPK/ERK-dependent phosphorylation of GRIN2B/NMDAR2B. The protein is C-C motif chemokine 2 (CCL2) of Cavia porcellus (Guinea pig).